Consider the following 272-residue polypeptide: Zinc transporter ZupT (272 aa).

Helical transmembrane passes span 12-32 (ALAVTLAAGLATGLGSLMVVF), 40-60 (LLAFGLAFAGGAMVFVSLSEI), 76-96 (LGFTYGTLTFLGGMLLIMVID), 126-146 (LLTAVAITAHNFPEGLATFFA), 158-178 (AFAIAIHNIPEGIAIAVPVYF), 187-207 (FGASLLSGLAEPIGAGIGYLL), 211-231 (VLSEAVFGAVFGVIAGVMVFL), and 247-267 (HETVYGLVSGMGTLAISLVLF). Fe(2+)-binding residues include Asn-136 and Glu-139. The Zn(2+) site is built by Glu-139 and His-164. Fe(2+)-binding residues include Asn-165, Glu-168, and Glu-197. Position 168 (Glu-168) interacts with Zn(2+).

The protein belongs to the ZIP transporter (TC 2.A.5) family. ZupT subfamily.

Its subcellular location is the cell inner membrane. The enzyme catalyses Zn(2+)(in) = Zn(2+)(out). Its function is as follows. Mediates zinc uptake. May also transport other divalent cations. In Xanthomonas campestris pv. campestris (strain ATCC 33913 / DSM 3586 / NCPPB 528 / LMG 568 / P 25), this protein is Zinc transporter ZupT.